Here is a 570-residue protein sequence, read N- to C-terminus: Formate--tetrahydrofolate ligase (570 aa).

65–72 provides a ligand contact to ATP; that stretch reads TPHGEGKT.

Belongs to the formate--tetrahydrofolate ligase family.

It carries out the reaction (6S)-5,6,7,8-tetrahydrofolate + formate + ATP = (6R)-10-formyltetrahydrofolate + ADP + phosphate. The protein operates within one-carbon metabolism; tetrahydrofolate interconversion. The sequence is that of Formate--tetrahydrofolate ligase from Shewanella oneidensis (strain ATCC 700550 / JCM 31522 / CIP 106686 / LMG 19005 / NCIMB 14063 / MR-1).